A 1017-amino-acid polypeptide reads, in one-letter code: Probable DNA ligase (1017 aa).

Residues 1-363 (MPWDVKFSHG…PACATPLHAP (363 aa)) are unknown. The disordered stretch occupies residues 326–352 (GIRSSPPQVRAGDATPSSRSSGDAGVA). The segment at 364–1017 (DSFARFVAAA…GARPPPAASD (654 aa)) is DNA ligase. E667 is an ATP binding site. The active-site N6-AMP-lysine intermediate is the K669. ATP is bound by residues R674, R689, E717, R860, and K866.

In the C-terminal section; belongs to the ATP-dependent DNA ligase family. Mg(2+) is required as a cofactor.

The enzyme catalyses ATP + (deoxyribonucleotide)n-3'-hydroxyl + 5'-phospho-(deoxyribonucleotide)m = (deoxyribonucleotide)n+m + AMP + diphosphate.. DNA ligase that seals nicks in double-stranded DNA during DNA replication, DNA recombination and DNA repair. The chain is Probable DNA ligase (lig) from Opitutus terrae (strain DSM 11246 / JCM 15787 / PB90-1).